A 618-amino-acid chain; its full sequence is Grainyhead-like protein 1 homolog (618 aa).

The segment at 1 to 91 (MTQEYDNKRP…EVEHPEPDHS (91 aa)) is transcription activation. The segment covering 74–92 (RRSSTAKPEVEHPEPDHSK) has biased composition (basic and acidic residues). The interval 74 to 94 (RRSSTAKPEVEHPEPDHSKRN) is disordered. Thr208 is modified (phosphothreonine). The Grh/CP2 DB domain maps to 248-474 (SGNNFEYTLE…DLDTQPVLFI (227 aa)). Interaction with DNA stretches follow at residues 380–389 (TDFSSQKGVK) and 427–430 (RKIR).

Belongs to the grh/CP2 family. Grainyhead subfamily. In terms of assembly, binds DNA as homodimer. Homodimer, also forms heterodimers with GRHL2 or GRHL3. Methylation at Arg-9 and Lys-116 may be involved in regulating transcriptional activation.

It localises to the nucleus. Transcription factor involved in epithelial development. Binds directly to the consensus DNA sequence 5'-AACCGGTT-3'. Important regulator of DSG1 in the context of hair anchorage and epidermal differentiation, participates in the maintenance of the skin barrier. There is no genetic interaction with GRHL3, nor functional cooperativity due to diverse target gene selectivity during epithelia development. May play a role in regulating glucose homeostasis and insulin signaling. The sequence is that of Grainyhead-like protein 1 homolog (GRHL1) from Pongo abelii (Sumatran orangutan).